The sequence spans 444 residues: UPF0761 membrane protein RC1_0578 (444 aa).

Helical transmembrane passes span 49-69 (LLALVPLLTVTFAIFSAFPAY), 103-123 (AAALTGFGVIGLSLTSILLFF), 145-165 (LLSFWAVLTIMPLLLGASLSV), 186-206 (FMLPGLLEAAAFTLMFLMIPN), 219-239 (IAAALLMEVSKVGFGLYIAAF), and 248-268 (ALSVIPIFLFWLYTVWSVVLF). The disordered stretch occupies residues 423–444 (SGQPSGQVETAVRQRTGLQGRI).

The protein belongs to the UPF0761 family.

The protein resides in the cell inner membrane. The polypeptide is UPF0761 membrane protein RC1_0578 (Rhodospirillum centenum (strain ATCC 51521 / SW)).